A 375-amino-acid chain; its full sequence is DNA replication and repair protein RecF (375 aa).

An ATP-binding site is contributed by 30–37 (GENAQGKT).

It belongs to the RecF family.

It is found in the cytoplasm. Functionally, the RecF protein is involved in DNA metabolism; it is required for DNA replication and normal SOS inducibility. RecF binds preferentially to single-stranded, linear DNA. It also seems to bind ATP. The sequence is that of DNA replication and repair protein RecF from Bacillus thuringiensis (strain Al Hakam).